We begin with the raw amino-acid sequence, 338 residues long: Outer membrane transporter protein TsaT (338 aa).

The signal sequence occupies residues 1–22 (MNFRRRLCTAALIAALPLASQA).

Part of a two-component transport system composed of TsaT and TsaS.

The protein localises to the cell outer membrane. Functionally, involved in the uptake of p-toluenesulphonate (TSA). Forms a large, general diffusion pore with a preference for anions. The protein is Outer membrane transporter protein TsaT (tsaT) of Comamonas testosteroni (Pseudomonas testosteroni).